Consider the following 1176-residue polypeptide: Carbamoyl phosphate synthase arginine-specific large chain (1176 aa).

A mitochondrion-targeting transit peptide spans 1–11 (MLRSISIASRA). Residues 70–465 (SRSPDVKKVL…SLQKAIRQVD (396 aa)) are carboxyphosphate synthetic domain. Arg-197, Arg-237, Gly-243, Gly-244, Lys-273, Leu-275, Glu-280, Gly-306, Thr-307, His-308, Gln-348, and Glu-362 together coordinate ATP. Positions 201–391 (VQALNEIDIP…LAYTAAKIAL (191 aa)) constitute an ATP-grasp 1 domain. The Mg(2+) site is built by Gln-348, Glu-362, and Asn-364. Residues Gln-348, Glu-362, and Asn-364 each contribute to the Mn(2+) site. An oligomerization domain region spans residues 466-610 (PNFAGFEAYW…YTSYNATTHD (145 aa)). Positions 611 to 997 (VKFDNGTMVL…AYWAALLSVN (387 aa)) are carbamoyl phosphate synthetic domain. In terms of domain architecture, ATP-grasp 2 spans 734–931 (SSILDSIGVD…FIDTASAAIM (198 aa)). Arg-770, Gln-809, Ile-811, Glu-816, Gly-841, Val-842, His-843, Ser-844, Gln-884, and Glu-902 together coordinate ATP. Gln-884, Glu-902, and Asn-904 together coordinate Mg(2+). Mn(2+) contacts are provided by Gln-884, Glu-902, and Asn-904. Positions 998–1137 (GMKLPKANSG…NPIPYSEGFK (140 aa)) are allosteric domain. Residues 999 to 1154 (MKLPKANSGI…RDFVGEAATT (156 aa)) form the MGS-like domain.

It belongs to the CarB family. Heterodimer composed of 2 chains; the small (or glutamine) chain promotes the hydrolysis of glutamine to ammonia, which is used by the large (or ammonia) chain to synthesize carbamoyl phosphate. Mg(2+) is required as a cofactor. Mn(2+) serves as cofactor.

It is found in the mitochondrion. It catalyses the reaction hydrogencarbonate + L-glutamine + 2 ATP + H2O = carbamoyl phosphate + L-glutamate + 2 ADP + phosphate + 2 H(+). The enzyme catalyses hydrogencarbonate + NH4(+) + 2 ATP = carbamoyl phosphate + 2 ADP + phosphate + 2 H(+). It participates in amino-acid biosynthesis; L-arginine biosynthesis; carbamoyl phosphate from bicarbonate: step 1/1. In terms of biological role, large subunit of the arginine-specific carbamoyl phosphate synthase (CPSase). CPSase catalyzes the formation of carbamoyl phosphate from the ammonia moiety of glutamine, hydrogencarbonate, and phosphate donated by ATP, constituting the first step of 2 biosynthetic pathways, one leading to arginine and/or urea and the other to pyrimidine nucleotides. The large subunit (synthetase) binds the substrates ammonia (free or transferred from glutamine from the small subunit), hydrogencarbonate and ATP and carries out an ATP-coupled ligase reaction, activating hydrogencarbonate by forming carboxy phosphate which reacts with ammonia to form carbamoyl phosphate. In Cutaneotrichosporon cutaneum (Yeast), this protein is Carbamoyl phosphate synthase arginine-specific large chain (argA).